Here is a 143-residue protein sequence, read N- to C-terminus: Fido domain-containing protein DDB_G0283145 (143 aa).

Residues Met1–Asn128 enclose the Fido domain. The helical transmembrane segment at Ser49–Ile69 threads the bilayer.

It localises to the membrane. In Dictyostelium discoideum (Social amoeba), this protein is Fido domain-containing protein DDB_G0283145.